Here is a 488-residue protein sequence, read N- to C-terminus: 6-phosphogluconate dehydrogenase, decarboxylating (488 aa).

Residues 9–14 (GLAVMG), 32–34 (NRT), 74–76 (VKA), and Asn102 contribute to the NADP(+) site. Residues Asn102 and 128–130 (SGG) contribute to the substrate site. Residue Lys183 is the Proton acceptor of the active site. Substrate is bound at residue 186 to 187 (HN). Residue Glu190 is the Proton donor of the active site. The substrate site is built by Tyr191, Lys260, Arg287, Arg451, and His457.

This sequence belongs to the 6-phosphogluconate dehydrogenase family. In terms of assembly, homodimer.

It carries out the reaction 6-phospho-D-gluconate + NADP(+) = D-ribulose 5-phosphate + CO2 + NADPH. Its pathway is carbohydrate degradation; pentose phosphate pathway; D-ribulose 5-phosphate from D-glucose 6-phosphate (oxidative stage): step 3/3. Functionally, catalyzes the oxidative decarboxylation of 6-phosphogluconate to ribulose 5-phosphate and CO(2), with concomitant reduction of NADP to NADPH. The polypeptide is 6-phosphogluconate dehydrogenase, decarboxylating (gnd) (Treponema pallidum (strain Nichols)).